The chain runs to 303 residues: D-alanine--D-alanine ligase (303 aa).

One can recognise an ATP-grasp domain in the interval 103–293 (KTLFIKGGIP…FAQLCEKILE (191 aa)). ATP is bound at residue 130-179 (PYVIKPSRQGSSIGIEFVYDIKELDQAIKKSTQYDHVVLAEALITGKELT). 3 residues coordinate Mg(2+): Asp247, Glu260, and Asn262.

This sequence belongs to the D-alanine--D-alanine ligase family. Requires Mg(2+) as cofactor. It depends on Mn(2+) as a cofactor.

It localises to the cytoplasm. It catalyses the reaction 2 D-alanine + ATP = D-alanyl-D-alanine + ADP + phosphate + H(+). It participates in cell wall biogenesis; peptidoglycan biosynthesis. Functionally, cell wall formation. The polypeptide is D-alanine--D-alanine ligase (Methylacidiphilum infernorum (isolate V4) (Methylokorus infernorum (strain V4))).